The chain runs to 177 residues: GTP-dependent dephospho-CoA kinase (177 aa).

Asp-48, Val-49, Val-50, Asp-67, Lys-69, Glu-124, and Asp-147 together coordinate GTP.

The protein belongs to the GTP-dependent DPCK family.

It carries out the reaction 3'-dephospho-CoA + GTP = GDP + CoA + H(+). The protein operates within cofactor biosynthesis; coenzyme A biosynthesis. Catalyzes the GTP-dependent phosphorylation of the 3'-hydroxyl group of dephosphocoenzyme A to form coenzyme A (CoA). This is GTP-dependent dephospho-CoA kinase from Thermococcus onnurineus (strain NA1).